The following is a 138-amino-acid chain: uncharacterized protein (138 aa).

Positions 84–104 are disordered; that stretch reads PPKKTSPATSSSLKPRPGPRG. Over residues 85 to 98 the composition is skewed to low complexity; sequence PKKTSPATSSSLKP.

This sequence to M.pneumoniae MPN_413 and MPN_463.

This is an uncharacterized protein from Mycoplasma pneumoniae (strain ATCC 29342 / M129 / Subtype 1) (Mycoplasmoides pneumoniae).